Here is a 235-residue protein sequence, read N- to C-terminus: MGTADSDEMAPEAPQHTHIDVHIHQESALAKLLLTCCSALRPRATQARGSSRLLVASWVMQIVLGILSAVLGGFFYIRDYTLLVTSGAAIWTGAVAVLAGAAAFIYEKRGGTYWALLRTLLTLAAFSTAIAALKLWNEDFRYGYSYYNSACRISSSSDWNTPAPTQSPEEVRRLHLCTSFMDMLKALFRTLQAMLLGVWILLLLASLTPLWLYCWRMFPTKGKRDQKEMLEVSGI.

Ser-38 is modified (phosphoserine). Transmembrane regions (helical) follow at residues 55 to 75 (VASW…GGFF), 86 to 106 (SGAA…AFIY), 113 to 133 (YWAL…IAAL), and 193 to 213 (AMLL…LWLY).

Belongs to the TMEM176 family. In terms of assembly, interacts with MCOLN2.

The protein localises to the membrane. This is Transmembrane protein 176A (TMEM176A) from Homo sapiens (Human).